The following is a 718-amino-acid chain: Catalase-peroxidase (718 aa).

Residues 98-219 (WHAAGTYRMG…LAATEMGLIY (122 aa)) constitute a cross-link (tryptophyl-tyrosyl-methioninium (Trp-Tyr) (with M-245)). His99 acts as the Proton acceptor in catalysis. The segment at residues 219–245 (YVNPEGPQASGDPRSAAPFIRATFGNM) is a cross-link (tryptophyl-tyrosyl-methioninium (Tyr-Met) (with W-98)). Position 260 (His260) interacts with heme b.

It belongs to the peroxidase family. Peroxidase/catalase subfamily. In terms of assembly, homodimer or homotetramer. Requires heme b as cofactor. Formation of the three residue Trp-Tyr-Met cross-link is important for the catalase, but not the peroxidase activity of the enzyme.

It catalyses the reaction H2O2 + AH2 = A + 2 H2O. It carries out the reaction 2 H2O2 = O2 + 2 H2O. Bifunctional enzyme with both catalase and broad-spectrum peroxidase activity. The chain is Catalase-peroxidase from Acinetobacter baumannii (strain ATCC 17978 / DSM 105126 / CIP 53.77 / LMG 1025 / NCDC KC755 / 5377).